A 448-amino-acid chain; its full sequence is Exodeoxyribonuclease 7 large subunit (448 aa).

It belongs to the XseA family. As to quaternary structure, heterooligomer composed of large and small subunits.

It is found in the cytoplasm. It catalyses the reaction Exonucleolytic cleavage in either 5'- to 3'- or 3'- to 5'-direction to yield nucleoside 5'-phosphates.. Bidirectionally degrades single-stranded DNA into large acid-insoluble oligonucleotides, which are then degraded further into small acid-soluble oligonucleotides. The protein is Exodeoxyribonuclease 7 large subunit of Enterococcus faecalis (strain ATCC 700802 / V583).